A 488-amino-acid chain; its full sequence is Probable indole-3-acetic acid-amido synthetase GH3.6 (488 aa).

It belongs to the IAA-amido conjugating enzyme family. Expressed in roots and callus.

Its function is as follows. May catalyze the synthesis of indole-3-acetic acid (IAA)-amino acid conjugates, providing a mechanism for the plant to cope with the presence of excess auxin. This Oryza sativa subsp. japonica (Rice) protein is Probable indole-3-acetic acid-amido synthetase GH3.6 (GH3.6).